Here is a 358-residue protein sequence, read N- to C-terminus: Peptide chain release factor 1 (358 aa).

N5-methylglutamine is present on glutamine 237.

Belongs to the prokaryotic/mitochondrial release factor family. Post-translationally, methylated by PrmC. Methylation increases the termination efficiency of RF1.

The protein localises to the cytoplasm. In terms of biological role, peptide chain release factor 1 directs the termination of translation in response to the peptide chain termination codons UAG and UAA. The protein is Peptide chain release factor 1 of Streptomyces avermitilis (strain ATCC 31267 / DSM 46492 / JCM 5070 / NBRC 14893 / NCIMB 12804 / NRRL 8165 / MA-4680).